A 322-amino-acid chain; its full sequence is UDP-N-acetylenolpyruvoylglucosamine reductase (322 aa).

Residues 36-202 (RAGGPAQVLF…TSVLFEGVPG (167 aa)) form the FAD-binding PCMH-type domain. R182 is a catalytic residue. Catalysis depends on S231, which acts as the Proton donor. E301 is a catalytic residue.

Belongs to the MurB family. Requires FAD as cofactor.

It is found in the cytoplasm. The enzyme catalyses UDP-N-acetyl-alpha-D-muramate + NADP(+) = UDP-N-acetyl-3-O-(1-carboxyvinyl)-alpha-D-glucosamine + NADPH + H(+). It participates in cell wall biogenesis; peptidoglycan biosynthesis. Cell wall formation. The protein is UDP-N-acetylenolpyruvoylglucosamine reductase of Brucella canis (strain ATCC 23365 / NCTC 10854 / RM-666).